A 305-amino-acid polypeptide reads, in one-letter code: Superkiller complex protein 8 (305 aa).

An N-acetylmethionine modification is found at methionine 1. Threonine 2 is modified (N-acetylthreonine; in WD repeat-containing protein 61, N-terminally processed). WD repeat units follow at residues 14–57 (AHDD…LDLQ), 62–101 (GHQL…QIKS), 104–143 (AGPV…KEYS), 146–187 (TRGK…HTLE), 188–227 (GHAM…LAGT), 230–269 (GHAS…CVHT), and 272–305 (DHQD…DCPI).

This sequence belongs to the SKI8 family. Component of the PAF1 complex, which consists of CDC73, PAF1, LEO1, CTR9, RTF1 and SKIC8. The PAF1 complex interacts with PHF5A. Within the PAF1 complex interacts directly with PHF5A. Component of the SKI complex which consists of SKIC2, SKIC3 and SKIC8.

It localises to the nucleus. It is found in the cytoplasm. In terms of biological role, component of the PAF1 complex (PAF1C) which has multiple functions during transcription by RNA polymerase II and is implicated in regulation of development and maintenance of embryonic stem cell pluripotency. PAF1C associates with RNA polymerase II through interaction with POLR2A CTD non-phosphorylated and 'Ser-2'- and 'Ser-5'-phosphorylated forms and is involved in transcriptional elongation, acting both independently and synergistically with TCEA1 and in cooperation with the DSIF complex and HTATSF1. PAF1C is required for transcription of Hox and Wnt target genes. PAF1C is involved in hematopoiesis and stimulates transcriptional activity of KMT2A/MLL1; it promotes leukemogenesis through association with KMT2A/MLL1-rearranged oncoproteins, such as KMT2A/MLL1-MLLT3/AF9 and KMT2A/MLL1-MLLT1/ENL. PAF1C is involved in histone modifications such as ubiquitination of histone H2B and methylation on histone H3 'Lys-4' (H3K4me3). PAF1C recruits the RNF20/40 E3 ubiquitin-protein ligase complex and the E2 enzyme UBE2A or UBE2B to chromatin which mediate monoubiquitination of 'Lys-120' of histone H2B (H2BK120ub1); UB2A/B-mediated H2B ubiquitination is proposed to be coupled to transcription. PAF1C is involved in mRNA 3' end formation probably through association with cleavage and poly(A) factors. In case of infection by influenza A strain H3N2, PAF1C associates with viral NS1 protein, thereby regulating gene transcription. Required for mono- and trimethylation on histone H3 'Lys-4' (H3K4me3), dimethylation on histone H3 'Lys-79' (H3K4me3). Required for Hox gene transcription. Also acts as a component of the SKI complex, a multiprotein complex that assists the RNA-degrading exosome during the mRNA decay and quality-control pathways. The SKI complex catalyzes mRNA extraction from 80S ribosomal complexes in the 3'-5' direction and channels mRNA to the cytosolic exosome for degradation. SKI-mediated extraction of mRNA from stalled ribosomes allow binding of the Pelota-HBS1L complex and subsequent ribosome disassembly by ABCE1 for ribosome recycling. This Homo sapiens (Human) protein is Superkiller complex protein 8.